The primary structure comprises 803 residues: Leucine--tRNA ligase (803 aa).

The 'HIGH' region motif lies at 40-51 (PYPSGAGLHVGH). A 'KMSKS' region motif is present at residues 575 to 579 (KMSKS). Lys578 contacts ATP.

Belongs to the class-I aminoacyl-tRNA synthetase family.

The protein localises to the cytoplasm. The enzyme catalyses tRNA(Leu) + L-leucine + ATP = L-leucyl-tRNA(Leu) + AMP + diphosphate. The protein is Leucine--tRNA ligase of Listeria monocytogenes serovar 1/2a (strain ATCC BAA-679 / EGD-e).